A 501-amino-acid chain; its full sequence is Phase 2 flagellin (501 aa).

The protein belongs to the bacterial flagellin family.

It is found in the secreted. The protein localises to the bacterial flagellum. Functionally, flagellin is the subunit protein which polymerizes to form the filaments of bacterial flagella. In Salmonella abortus-equi, this protein is Phase 2 flagellin (fljB).